The following is a 474-amino-acid chain: Probable fucosyltransferase 9 (474 aa).

Residues 1 to 21 (MIKLTIAIATCLVLCLVLLLP) traverse the membrane as a helical; Signal-anchor for type II membrane protein segment. The Lumenal segment spans residues 22–474 (SSNISYRHKY…LKLVDVSDEL (453 aa)). Asn-24, Asn-39, and Asn-208 each carry an N-linked (GlcNAc...) asparagine glycan.

This sequence belongs to the glycosyltransferase 37 family. Expressed in leaves and stems.

It is found in the golgi apparatus. The protein localises to the golgi stack membrane. It functions in the pathway protein modification; protein glycosylation. Functionally, may be involved in cell wall biosynthesis. May act as a fucosyltransferase. This is Probable fucosyltransferase 9 (FUT9) from Arabidopsis thaliana (Mouse-ear cress).